Consider the following 268-residue polypeptide: Shikimate kinase (268 aa).

An ATP-binding site is contributed by 70–80 (PSGYGLKSSSA).

This sequence belongs to the GHMP kinase family. Archaeal shikimate kinase subfamily.

It localises to the cytoplasm. It carries out the reaction shikimate + ATP = 3-phosphoshikimate + ADP + H(+). The protein operates within metabolic intermediate biosynthesis; chorismate biosynthesis; chorismate from D-erythrose 4-phosphate and phosphoenolpyruvate: step 5/7. This chain is Shikimate kinase (aroK), found in Thermoplasma acidophilum (strain ATCC 25905 / DSM 1728 / JCM 9062 / NBRC 15155 / AMRC-C165).